A 106-amino-acid chain; its full sequence is Apovitellenin-1 (106 aa).

A signal peptide spans 1-24 (MVQYRALVIAVILLLSTTVPEVHS).

Belongs to the apovitellenin family. In terms of assembly, homodimer; disulfide-linked. Produced by the liver, secreted into the blood and then sequestred by receptor mediated endocytosis into growing oocytes.

In terms of biological role, protein component of the very low density lipoprotein (VLDL) of egg-laying females. Potent lipoprotein lipase inhibitor, preventing the loss of triglycerides from VLDL on their way from the liver to the growing oocytes. This chain is Apovitellenin-1, found in Gallus gallus (Chicken).